A 320-amino-acid chain; its full sequence is Cytochrome f (320 aa).

Positions 1-36 (MKHTNSKQKLKDIINFCQAIFTLCIICLYQANISNS) are cleaved as a signal peptide. The heme site is built by tyrosine 37, cysteine 57, cysteine 60, and histidine 61. The helical transmembrane segment at 286–305 (LISFIFFSISVLISQLFFVL) threads the bilayer.

It belongs to the cytochrome f family. As to quaternary structure, the 4 large subunits of the cytochrome b6-f complex are cytochrome b6, subunit IV (17 kDa polypeptide, petD), cytochrome f and the Rieske protein, while the 4 small subunits are PetG, PetL, PetM and PetN. The complex functions as a dimer. It depends on heme as a cofactor.

It localises to the plastid. Its subcellular location is the chloroplast thylakoid membrane. In terms of biological role, component of the cytochrome b6-f complex, which mediates electron transfer between photosystem II (PSII) and photosystem I (PSI), cyclic electron flow around PSI, and state transitions. The protein is Cytochrome f (petA) of Cyanidium caldarium (Red alga).